Here is an 85-residue protein sequence, read N- to C-terminus: UPF0297 protein CHY_0540 (85 aa).

It belongs to the UPF0297 family.

This Carboxydothermus hydrogenoformans (strain ATCC BAA-161 / DSM 6008 / Z-2901) protein is UPF0297 protein CHY_0540.